A 94-amino-acid polypeptide reads, in one-letter code: Large ribosomal subunit protein bL28A (94 aa).

The segment at 63–94 is disordered; it reads GHRGRRRAARAGSAPAHFARQAGSSLRTAAIL. The segment covering 72–82 has biased composition (low complexity); the sequence is RAGSAPAHFAR. The segment covering 84 to 94 has biased composition (polar residues); the sequence is AGSSLRTAAIL.

Belongs to the bacterial ribosomal protein bL28 family.

This chain is Large ribosomal subunit protein bL28A (rpmB1), found in Mycobacterium bovis (strain ATCC BAA-935 / AF2122/97).